Here is a 366-residue protein sequence, read N- to C-terminus: MKQSPLHRPSRPLLALGIEGSANKLGCGIISHSPSPTGGPTLVMVLSNVRHTYITPPGEGFLPSDTARHHREWVVKVIEEAVRKAGVRMGDLDCIAFTKGPGMGTPLQVGALVARTLSLLHNIPLVGVNHCVGHIEMGRQITSSHNPIVLYVSGGNTQVIAYSQQRYRIFGETLDIAIGNCLDRFARVIGLRNDPSPGYNIEKEAKKGKRLVQLPYGTKGMDVSLAGILHSVEAYTKDKRYRSWDQVNDVEEDIITPYDLCFSLQETTFAMLVEITERAMAHVGAKDVLIVGGVGCNLRLQEMMGIMASERGGRVFATDESFCIDNGIMIAQAGLLAFRMGNTMPLEKTGVTQRYRTDAVHVAWRA.

A divalent metal cation is bound by residues H130, H134, and Y151. Substrate is bound by residues 151–155 (YVSGG), D183, G198, E202, and N297. D325 contributes to the a divalent metal cation binding site.

Belongs to the KAE1 / TsaD family. Component of the EKC/KEOPS complex composed of at least BUD32, CGI121, GON7, KAE1 and PCC1; the whole complex dimerizes. A divalent metal cation serves as cofactor.

The protein localises to the cytoplasm. It is found in the nucleus. It catalyses the reaction L-threonylcarbamoyladenylate + adenosine(37) in tRNA = N(6)-L-threonylcarbamoyladenosine(37) in tRNA + AMP + H(+). Component of the EKC/KEOPS complex that is required for the formation of a threonylcarbamoyl group on adenosine at position 37 (t(6)A37) in tRNAs that read codons beginning with adenine. The complex is probably involved in the transfer of the threonylcarbamoyl moiety of threonylcarbamoyl-AMP (TC-AMP) to the N6 group of A37. KAE1 likely plays a direct catalytic role in this reaction, but requires other protein(s) of the complex to fulfill this activity. The EKC/KEOPS complex also promotes both telomere uncapping and telomere elongation. The complex is required for efficient recruitment of transcriptional coactivators. In Cryptococcus neoformans var. neoformans serotype D (strain JEC21 / ATCC MYA-565) (Filobasidiella neoformans), this protein is tRNA N6-adenosine threonylcarbamoyltransferase.